The primary structure comprises 270 residues: Putative pyruvate, phosphate dikinase regulatory protein (270 aa).

147–154 (GVSRSSKT) contributes to the ADP binding site.

The protein belongs to the pyruvate, phosphate/water dikinase regulatory protein family. PDRP subfamily.

The enzyme catalyses N(tele)-phospho-L-histidyl/L-threonyl-[pyruvate, phosphate dikinase] + ADP = N(tele)-phospho-L-histidyl/O-phospho-L-threonyl-[pyruvate, phosphate dikinase] + AMP + H(+). The catalysed reaction is N(tele)-phospho-L-histidyl/O-phospho-L-threonyl-[pyruvate, phosphate dikinase] + phosphate + H(+) = N(tele)-phospho-L-histidyl/L-threonyl-[pyruvate, phosphate dikinase] + diphosphate. Bifunctional serine/threonine kinase and phosphorylase involved in the regulation of the pyruvate, phosphate dikinase (PPDK) by catalyzing its phosphorylation/dephosphorylation. The chain is Putative pyruvate, phosphate dikinase regulatory protein from Citrifermentans bemidjiense (strain ATCC BAA-1014 / DSM 16622 / JCM 12645 / Bem) (Geobacter bemidjiensis).